A 730-amino-acid polypeptide reads, in one-letter code: Elongation factor 2 (730 aa).

One can recognise a tr-type G domain in the interval 19-260 (DRIRNIGIVA…MVVKHLPNPL (242 aa)). GTP-binding positions include 28–35 (AHIDHGKT), 94–98 (DTPGH), and 148–151 (NKVD). H597 is modified (diphthamide).

The protein belongs to the TRAFAC class translation factor GTPase superfamily. Classic translation factor GTPase family. EF-G/EF-2 subfamily.

The protein resides in the cytoplasm. Functionally, catalyzes the GTP-dependent ribosomal translocation step during translation elongation. During this step, the ribosome changes from the pre-translocational (PRE) to the post-translocational (POST) state as the newly formed A-site-bound peptidyl-tRNA and P-site-bound deacylated tRNA move to the P and E sites, respectively. Catalyzes the coordinated movement of the two tRNA molecules, the mRNA and conformational changes in the ribosome. This Methanoculleus marisnigri (strain ATCC 35101 / DSM 1498 / JR1) protein is Elongation factor 2.